Here is a 123-residue protein sequence, read N- to C-terminus: Large ribosomal subunit protein uL18 (123 aa).

Belongs to the universal ribosomal protein uL18 family. Part of the 50S ribosomal subunit; part of the 5S rRNA/L5/L18/L25 subcomplex. Contacts the 5S and 23S rRNAs.

Its function is as follows. This is one of the proteins that bind and probably mediate the attachment of the 5S RNA into the large ribosomal subunit, where it forms part of the central protuberance. This chain is Large ribosomal subunit protein uL18, found in Wolbachia pipientis wMel.